We begin with the raw amino-acid sequence, 323 residues long: Methionyl-tRNA formyltransferase (323 aa).

A (6S)-5,6,7,8-tetrahydrofolate-binding site is contributed by 117 to 120 (SLLP).

This sequence belongs to the Fmt family.

It carries out the reaction L-methionyl-tRNA(fMet) + (6R)-10-formyltetrahydrofolate = N-formyl-L-methionyl-tRNA(fMet) + (6S)-5,6,7,8-tetrahydrofolate + H(+). Functionally, attaches a formyl group to the free amino group of methionyl-tRNA(fMet). The formyl group appears to play a dual role in the initiator identity of N-formylmethionyl-tRNA by promoting its recognition by IF2 and preventing the misappropriation of this tRNA by the elongation apparatus. This Acidovorax ebreus (strain TPSY) (Diaphorobacter sp. (strain TPSY)) protein is Methionyl-tRNA formyltransferase.